We begin with the raw amino-acid sequence, 206 residues long: Sec-independent protein translocase protein TatB (206 aa).

A helical transmembrane segment spans residues 1–21 (MFDIGWTELLVIAVVLIVVVG). The segment at 104–206 (ENKTEVPSAA…VQTKKKKDEA (103 aa)) is disordered. Low complexity predominate over residues 110–124 (PSAAMSAPTPSMSLP). Residues 125–138 (ETPPVVPTPAPAPE) show a composition bias toward pro residues. Composition is skewed to low complexity over residues 139–151 (PAAVAAETVAAKP) and 187–196 (ARKPAAPKTP).

It belongs to the TatB family. The Tat system comprises two distinct complexes: a TatABC complex, containing multiple copies of TatA, TatB and TatC subunits, and a separate TatA complex, containing only TatA subunits. Substrates initially bind to the TatABC complex, which probably triggers association of the separate TatA complex to form the active translocon.

It localises to the cell inner membrane. Its function is as follows. Part of the twin-arginine translocation (Tat) system that transports large folded proteins containing a characteristic twin-arginine motif in their signal peptide across membranes. Together with TatC, TatB is part of a receptor directly interacting with Tat signal peptides. TatB may form an oligomeric binding site that transiently accommodates folded Tat precursor proteins before their translocation. This is Sec-independent protein translocase protein TatB from Rhizobium etli (strain ATCC 51251 / DSM 11541 / JCM 21823 / NBRC 15573 / CFN 42).